A 92-amino-acid polypeptide reads, in one-letter code: Small ribosomal subunit protein uS19 (92 aa).

Belongs to the universal ribosomal protein uS19 family.

In terms of biological role, protein S19 forms a complex with S13 that binds strongly to the 16S ribosomal RNA. The chain is Small ribosomal subunit protein uS19 from Xanthobacter autotrophicus (strain ATCC BAA-1158 / Py2).